Here is a 383-residue protein sequence, read N- to C-terminus: Probable indole-3-pyruvate monooxygenase YUCCA10 (383 aa).

Position 9–14 (9–14 (GAGPAG)) interacts with FAD. 177-182 (GGGNSG) lines the NADP(+) pocket.

Belongs to the FMO family. It depends on FAD as a cofactor.

The catalysed reaction is indole-3-pyruvate + NADPH + O2 + H(+) = (indol-3-yl)acetate + CO2 + NADP(+) + H2O. It functions in the pathway plant hormone metabolism; auxin biosynthesis. In terms of biological role, involved in auxin biosynthesis. The protein is Probable indole-3-pyruvate monooxygenase YUCCA10 (YUC10) of Arabidopsis thaliana (Mouse-ear cress).